The chain runs to 50 residues: U-megalopygitoxin(9)-Mo13 (50 aa).

The N-terminal stretch at 1–23 is a signal peptide; sequence MKLVFLFFIVAVMVSLFVGMTEA. Cysteines 33 and 40 form a disulfide.

It belongs to the caterpillar 9 family. Expressed by the venom apparatus.

The protein resides in the secreted. In terms of biological role, probable toxin. This chain is U-megalopygitoxin(9)-Mo13, found in Megalopyge opercularis (Southern flannel moth).